The chain runs to 397 residues: Succinyl-diaminopimelate desuccinylase (397 aa).

Histidine 74 lines the Zn(2+) pocket. Aspartate 76 is an active-site residue. Residue aspartate 107 participates in Zn(2+) binding. Glutamate 141 functions as the Proton acceptor in the catalytic mechanism. Positions 142, 170, and 368 each coordinate Zn(2+).

The protein belongs to the peptidase M20A family. DapE subfamily. In terms of assembly, homodimer. Zn(2+) is required as a cofactor. The cofactor is Co(2+).

It carries out the reaction N-succinyl-(2S,6S)-2,6-diaminopimelate + H2O = (2S,6S)-2,6-diaminopimelate + succinate. Its pathway is amino-acid biosynthesis; L-lysine biosynthesis via DAP pathway; LL-2,6-diaminopimelate from (S)-tetrahydrodipicolinate (succinylase route): step 3/3. Functionally, catalyzes the hydrolysis of N-succinyl-L,L-diaminopimelic acid (SDAP), forming succinate and LL-2,6-diaminopimelate (DAP), an intermediate involved in the bacterial biosynthesis of lysine and meso-diaminopimelic acid, an essential component of bacterial cell walls. The chain is Succinyl-diaminopimelate desuccinylase from Mesorhizobium japonicum (strain LMG 29417 / CECT 9101 / MAFF 303099) (Mesorhizobium loti (strain MAFF 303099)).